We begin with the raw amino-acid sequence, 1331 residues long: DNA-directed RNA polymerase subunit beta' (1331 aa).

C60, C62, C75, and C78 together coordinate Zn(2+). D535, D537, and D539 together coordinate Mg(2+). 4 residues coordinate Zn(2+): C902, C979, C986, and C989.

Belongs to the RNA polymerase beta' chain family. As to quaternary structure, the RNAP catalytic core consists of 2 alpha, 1 beta, 1 beta' and 1 omega subunit. When a sigma factor is associated with the core the holoenzyme is formed, which can initiate transcription. The cofactor is Mg(2+). Zn(2+) serves as cofactor.

It carries out the reaction RNA(n) + a ribonucleoside 5'-triphosphate = RNA(n+1) + diphosphate. DNA-dependent RNA polymerase catalyzes the transcription of DNA into RNA using the four ribonucleoside triphosphates as substrates. The protein is DNA-directed RNA polymerase subunit beta' of Corynebacterium aurimucosum (strain ATCC 700975 / DSM 44827 / CIP 107346 / CN-1) (Corynebacterium nigricans).